The primary structure comprises 306 residues: Acetaldehyde dehydrogenase (306 aa).

Cysteine 131 functions as the Acyl-thioester intermediate in the catalytic mechanism. Residues 162-170 (SAGPGTRKN) and asparagine 273 each bind NAD(+).

The protein belongs to the acetaldehyde dehydrogenase family.

It catalyses the reaction acetaldehyde + NAD(+) + CoA = acetyl-CoA + NADH + H(+). In Albidiferax ferrireducens (strain ATCC BAA-621 / DSM 15236 / T118) (Rhodoferax ferrireducens), this protein is Acetaldehyde dehydrogenase.